The following is a 533-amino-acid chain: Beta-glucosidase 22 (533 aa).

The first 24 residues, 1–24 (MAVSSSTSTCSSFSLLLLLLLLAA), serve as a signal peptide directing secretion. The N-linked (GlcNAc...) asparagine glycan is linked to Asn-41. A beta-D-glucoside contacts are provided by residues Gln-61, His-161, and 206–207 (DE). Glu-207 acts as the Proton donor in catalysis. An intrachain disulfide couples Cys-226 to Cys-234. 2 N-linked (GlcNAc...) asparagine glycosylation sites follow: Asn-233 and Asn-238. Residues Tyr-350 and Glu-421 each contribute to the a beta-D-glucoside site. Glu-421 serves as the catalytic Nucleophile. A glycan (N-linked (GlcNAc...) asparagine) is linked at Asn-435. A beta-D-glucoside is bound by residues Trp-466 and Phe-482.

The protein belongs to the glycosyl hydrolase 1 family.

The enzyme catalyses Hydrolysis of terminal, non-reducing beta-D-glucosyl residues with release of beta-D-glucose.. This Oryza sativa subsp. japonica (Rice) protein is Beta-glucosidase 22 (BGLU22).